The primary structure comprises 357 residues: Protein RecA (357 aa).

Residue 67–74 (GPESSGKT) participates in ATP binding. The disordered stretch occupies residues 333-357 (NELTPATAGNSHDEDAFADEGNEEF). Residues 348 to 357 (AFADEGNEEF) are compositionally biased toward acidic residues.

The protein belongs to the RecA family.

The protein localises to the cytoplasm. Functionally, can catalyze the hydrolysis of ATP in the presence of single-stranded DNA, the ATP-dependent uptake of single-stranded DNA by duplex DNA, and the ATP-dependent hybridization of homologous single-stranded DNAs. It interacts with LexA causing its activation and leading to its autocatalytic cleavage. This is Protein RecA from Pectobacterium carotovorum subsp. carotovorum (strain PC1).